A 1193-amino-acid polypeptide reads, in one-letter code: Sperm-associated antigen 5 (1193 aa).

Residues 1–48 (MWRVKKLSLSLSPSPQTGKPSMRTPLRELTLQPGALTNSGKRSPACSS) form a disordered region. A phosphoserine mark is found at Ser12, Ser14, Ser43, Ser62, and Ser66. Positions 35–48 (ALTNSGKRSPACSS) are enriched in polar residues. Positions 96 to 117 (ESDEQPLDPIPQISSTPKTSEE) are disordered. Thr111 carries the phosphothreonine; by GSK3-beta modification. Residues Ser135, Ser159, and Ser334 each carry the phosphoserine modification. Residue Thr336 is modified to Phosphothreonine. 3 positions are modified to phosphoserine: Ser341, Ser353, and Ser362. The span at 390-405 (PSAPQEKSTNTSQTGL) shows a compositional bias: polar residues. Residues 390–416 (PSAPQEKSTNTSQTGLVGTKHSTSETE) form a disordered region. The segment at 482–850 (NKLQHLKESH…LKDTVENLTA (369 aa)) is interaction with KNSTRN. Coiled coils occupy residues 545 to 608 (CCFD…SMRE) and 759 to 868 (QLTQ…EKTR). A Phosphothreonine; by GSK3-beta modification is found at Thr937. Ser974 bears the Phosphoserine; by GSK3-beta mark. Residue Thr978 is modified to Phosphothreonine; by GSK3-beta. Residues 979 to 1174 (ELQSLCSLLQ…VQHIYKTLLS (196 aa)) adopt a coiled-coil conformation.

In terms of assembly, homodimer, with a globular head domain and a long stalk. Homooligomer; the globular head domains associate, resulting in aster-like structures. Binds to microtubules in the mitotic spindle. Interacts with DCLRE1B/Apollo. Part of an astrin (SPAG5)-kinastrin (SKAP) complex containing KNSTRN, SPAG5, PLK1, DYNLL1 and SGO2. Interacts with KNSTRN. Interacts with RPTOR; this interaction competes with RPTOR binding to MTOR, resulting in decreased mTORC1 formation. Interacts with G3BP1. The complex formed with G3BP1 AND RPTOR is increased by oxidative stress. Interacts with OSBPL8, PCM1 and CDK5RAP2. Interacts (via C-terminus) with NUMA1 (via C-terminus); this interaction promotes the recruitment of SPAG5 to the microtubules at spindle poles in a dynein-dynactin-dependent manner. Interacts with DYNLL1. Phosphorylated by AURKA. Highly expressed in testis. Detected at low levels in placenta, liver, pancreas, thymus and colon.

The protein resides in the cytoplasm. The protein localises to the cytoskeleton. Its subcellular location is the spindle. It is found in the spindle pole. It localises to the chromosome. The protein resides in the centromere. The protein localises to the kinetochore. Its subcellular location is the midbody. It is found in the microtubule organizing center. It localises to the centrosome. The protein resides in the cytoplasmic granule. The protein localises to the centriolar satellite. Functionally, essential component of the mitotic spindle required for normal chromosome segregation and progression into anaphase. Required for chromosome alignment, normal timing of sister chromatid segregation, and maintenance of spindle pole architecture. In complex with SKAP, promotes stable microtubule-kinetochore attachments. May contribute to the regulation of separase activity. May regulate AURKA localization to mitotic spindle, but not to centrosomes and CCNB1 localization to both mitotic spindle and centrosomes. Involved in centriole duplication. Required for CDK5RAP2, CEP152, WDR62 and CEP63 centrosomal localization and promotes the centrosomal localization of CDK2. In non-mitotic cells, upon stress induction, inhibits mammalian target of rapamycin complex 1 (mTORC1) association and recruits the mTORC1 component RPTOR to stress granules (SGs), thereby preventing mTORC1 hyperactivation-induced apoptosis. May enhance GSK3B-mediated phosphorylation of other substrates, such as MAPT/TAU. This is Sperm-associated antigen 5 (SPAG5) from Homo sapiens (Human).